The following is a 296-amino-acid chain: Nitrogenase iron protein (296 aa).

11–18 (GKGGIGKS) is a binding site for ATP. Residue Cys99 participates in [4Fe-4S] cluster binding. Arg102 bears the ADP-ribosylarginine; by dinitrogenase reductase ADP-ribosyltransferase mark. Position 133 (Cys133) interacts with [4Fe-4S] cluster.

Belongs to the NifH/BchL/ChlL family. As to quaternary structure, homodimer. [4Fe-4S] cluster serves as cofactor. Post-translationally, the reversible ADP-ribosylation of Arg-102 inactivates the nitrogenase reductase and regulates nitrogenase activity.

It carries out the reaction N2 + 8 reduced [2Fe-2S]-[ferredoxin] + 16 ATP + 16 H2O = H2 + 8 oxidized [2Fe-2S]-[ferredoxin] + 2 NH4(+) + 16 ADP + 16 phosphate + 6 H(+). Its function is as follows. The key enzymatic reactions in nitrogen fixation are catalyzed by the nitrogenase complex, which has 2 components: the iron protein and the molybdenum-iron protein. The sequence is that of Nitrogenase iron protein (nifH1) from Sinorhizobium fredii (strain NBRC 101917 / NGR234).